The sequence spans 300 residues: MKNLTHLQRLEAEAIHVFREVAATFSNPVMLYSVGKDSSVMLHLAMKAFYPAPPPFPFLHVDTTWKFREMIEFRDAQAREKGFELLVHVNEQGVRDGIGPFTHGSNVHTHIMKTVGLRQALDKYRFDAAFGGARRDEEKSRAKERIFSFRNAQHGWDPKNQRPEMWKIYNTRVSKGESIRVFPLSNWTELDIWQYILQENIPIVPLYFAARRPVVERDGMLIMVDDDRMKLRPGEQVENRLVRFRTLGCYPLTGAIPSSAANLSDIVEEMLIARTSERQGRAIDRDEAGSMEKKKREGYF.

Residues 281-300 (RAIDRDEAGSMEKKKREGYF) are disordered.

The protein belongs to the PAPS reductase family. CysD subfamily. As to quaternary structure, heterodimer composed of CysD, the smaller subunit, and CysN.

It catalyses the reaction sulfate + ATP + H(+) = adenosine 5'-phosphosulfate + diphosphate. Its pathway is sulfur metabolism; hydrogen sulfide biosynthesis; sulfite from sulfate: step 1/3. With CysN forms the ATP sulfurylase (ATPS) that catalyzes the adenylation of sulfate producing adenosine 5'-phosphosulfate (APS) and diphosphate, the first enzymatic step in sulfur assimilation pathway. APS synthesis involves the formation of a high-energy phosphoric-sulfuric acid anhydride bond driven by GTP hydrolysis by CysN coupled to ATP hydrolysis by CysD. The polypeptide is Sulfate adenylyltransferase subunit 2 (Brucella canis (strain ATCC 23365 / NCTC 10854 / RM-666)).